A 234-amino-acid chain; its full sequence is Sugar fermentation stimulation protein A (234 aa).

A DNA-binding region (H-T-H motif) is located at residues Leu-201–Ser-220.

The protein belongs to the SfsA family.

Functionally, binds to DNA non-specifically. Could be a regulatory factor involved in maltose metabolism. In Escherichia coli O7:K1 (strain IAI39 / ExPEC), this protein is Sugar fermentation stimulation protein A.